The chain runs to 555 residues: WRKY transcription factor WRKY24 (555 aa).

Disordered stretches follow at residues 38 to 65 (GGGG…PSSF) and 132 to 248 (QTAP…CTFP). Positions 51–61 (PSLPLSPPPVS) are enriched in pro residues. Low complexity predominate over residues 163-194 (QQQQQPWGYQQQPAGMDAGANAASFGAAPFQA). A DNA-binding region (WRKY 1) is located at residues 214–278 (SQRRSSDDGY…YKGTHNHAKP (65 aa)). The short motif at 253 to 259 (KKKVERS) is the Nuclear localization signal element. The disordered stretch occupies residues 270 to 367 (KGTHNHAKPQ…EGISMAGNRT (98 aa)). 2 stretches are compositionally biased toward polar residues: residues 277 to 294 (KPQN…QVLQ) and 310 to 320 (TAATPENSSAS). The segment covering 347 to 356 (DSKRWRKDGD) has biased composition (basic and acidic residues). Residues 379-444 (SDIDILDDGY…YEGKHNHDVP (66 aa)) constitute a DNA-binding region (WRKY 2). The segment at 466-555 (HPYLPNQPPP…DDMFFQNSLY (90 aa)) is transcription repression of gibberellic acid (GA)-induced promoters. Disordered stretches follow at residues 471 to 498 (NQPP…GQGP) and 513 to 555 (GFDD…NSLY).

It belongs to the WRKY group II-a family. In terms of tissue distribution, expressed in aleurone cells. Mostly expressed in aleurone layers and leaves, and, to a lower extent, in roots, panicles and embryos.

The protein localises to the nucleus. Functionally, transcription repressor. Interacts specifically with the W box (5'-(T)TGAC[CT]-3'), a frequently occurring elicitor-responsive cis-acting element. Negative regulator of both gibberellic acid (GA) and abscisic acid (ABA) signaling in aleurone cells, probably by interfering with GAM1, via the specific repression of GA- and ABA-induced promoters. This chain is WRKY transcription factor WRKY24, found in Oryza sativa subsp. indica (Rice).